The chain runs to 301 residues: MKTKAGFVALIGKPNAGKSTLLNTLLNAHLALVSHKANATRKLMKCIVPFKDKEGYESQIIFLDTPGLHHQEKLLNQCMLSQALKAMGDAELCVFLASVHDDLKGYEEFLSLCQKPHILALSKIDTATHKQVLQKLQEYQQYDSQFLALVPLSAKKSQNLNALLECISKHLNPSAWLFEKDLMSDEKMRDIYKEIIRESLFDFLSDEIPYESDVMIDKFIEEERIDKVYARIIVEKESQKKIVIGKNGVNIKRIGTSARLKMQEVGEKKVFLNLQVIAQKSWSKEEKSLQKLGYTHQRNRD.

In terms of domain architecture, Era-type G spans 4 to 173; sequence KAGFVALIGK…LECISKHLNP (170 aa). A G1 region spans residues 12–19; that stretch reads GKPNAGKS. Residue 12–19 participates in GTP binding; sequence GKPNAGKS. Residues 38–42 form a G2 region; it reads NATRK. The interval 64-67 is G3; it reads DTPG. GTP contacts are provided by residues 64 to 68 and 122 to 125; these read DTPGL and SKID. The G4 stretch occupies residues 122 to 125; the sequence is SKID. The segment at 152-154 is G5; it reads LSA. Residues 204-280 enclose the KH type-2 domain; that stretch reads LSDEIPYESD…FLNLQVIAQK (77 aa).

The protein belongs to the TRAFAC class TrmE-Era-EngA-EngB-Septin-like GTPase superfamily. Era GTPase family. In terms of assembly, monomer.

The protein resides in the cytoplasm. The protein localises to the cell inner membrane. Its function is as follows. An essential GTPase that binds both GDP and GTP, with rapid nucleotide exchange. Plays a role in 16S rRNA processing and 30S ribosomal subunit biogenesis and possibly also in cell cycle regulation and energy metabolism. The chain is GTPase Era from Helicobacter pylori (strain P12).